The primary structure comprises 581 residues: La-related protein 7 (581 aa).

Position 1 is an N-acetylmethionine (Met-1). The span at 1-10 (METESGNQKN) shows a compositional bias: polar residues. 3 disordered regions span residues 1-28 (METE…KKKR), 188-368 (NPPE…ERHK), and 410-440 (KSES…CPTQ). The 95-residue stretch at 28 to 122 (RSRVKQVLAD…KPLGERPKDE (95 aa)) folds into the HTH La-type RNA-binding domain. The region spanning 125 to 203 (RTVYVELLPK…PRKPGIFPKT (79 aa)) is the RRM domain. Positions 219–228 (KKKKKKKGRM) are enriched in basic residues. Positions 229–240 (KKEDNVQAKEEN) are enriched in basic and acidic residues. A Glycyl lysine isopeptide (Lys-Gly) (interchain with G-Cter in SUMO2) cross-link involves residue Lys-237. Thr-257 is subject to Phosphothreonine. Phosphoserine occurs at positions 258, 261, 273, 298, 299, and 300. Residues 316-335 (IQKDIIKEPSEASKENRDIE) show a composition bias toward basic and acidic residues. Position 337 is a phosphoserine (Ser-337). A Phosphothreonine modification is found at Thr-338. The residue at position 351 (Ser-351) is a Phosphoserine. Residues 354-367 (KTKRKHKKKHKERH) show a composition bias toward basic residues. Residue Lys-410 forms a Glycyl lysine isopeptide (Lys-Gly) (interchain with G-Cter in SUMO2) linkage. The xRRM domain occupies 449–562 (QFVSGVIVKI…TEKLITKAEK (114 aa)).

It belongs to the LARP7 family. As to quaternary structure, core component of the 7SK RNP complex, at least composed of 7SK RNA, LARP7, MEPCE, HEXIM1 (or HEXIM2) and P-TEFb (composed of CDK9 and CCNT1/cyclin-T1). Interacts with METTL16. Interacts with RBM7; upon genotoxic stress this interaction is enhanced, triggering the release of inactive P-TEFb complex from the core, yielding to P-TEFb complex activation. Associates with box C/D small nucleolar ribonucleoprotein (snoRNP) complexes.

The protein localises to the nucleus. Its subcellular location is the nucleoplasm. RNA-binding protein that specifically binds distinct small nuclear RNA (snRNAs) and regulates their processing and function. Specifically binds the 7SK snRNA (7SK RNA) and acts as a core component of the 7SK ribonucleoprotein (RNP) complex, thereby acting as a negative regulator of transcription elongation by RNA polymerase II. The 7SK RNP complex sequesters the positive transcription elongation factor b (P-TEFb) in a large inactive 7SK RNP complex preventing RNA polymerase II phosphorylation and subsequent transcriptional elongation. The 7SK RNP complex also promotes snRNA gene transcription by RNA polymerase II via interaction with the little elongation complex (LEC). LARP7 specifically binds to the highly conserved 3'-terminal U-rich stretch of 7SK RNA; on stimulation, remains associated with 7SK RNA, whereas P-TEFb is released from the complex. LARP7 also acts as a regulator of mRNA splicing fidelity by promoting U6 snRNA processing. Specifically binds U6 snRNAs and associates with a subset of box C/D RNP complexes: promotes U6 snRNA 2'-O-methylation by facilitating U6 snRNA loading into box C/D RNP complexes. U6 snRNA 2'-O-methylation is required for mRNA splicing fidelity. Binds U6 snRNAs with a 5'-CAGGG-3' sequence motif. U6 snRNA processing is required for spermatogenesis. The chain is La-related protein 7 from Macaca fascicularis (Crab-eating macaque).